Consider the following 656-residue polypeptide: DNA ligase (656 aa).

Residues 32–36 (DAVYD) and 81–82 (SL) contribute to the NAD(+) site. Catalysis depends on K112, which acts as the N6-AMP-lysine intermediate. NAD(+)-binding residues include R133, E167, and K306. Zn(2+)-binding residues include C400, C403, C416, and C421. One can recognise a BRCT domain in the interval 577 to 656 (KSSSVFNNKT…ELLKRLKELD (80 aa)).

It belongs to the NAD-dependent DNA ligase family. LigA subfamily. It depends on Mg(2+) as a cofactor. Requires Mn(2+) as cofactor.

It catalyses the reaction NAD(+) + (deoxyribonucleotide)n-3'-hydroxyl + 5'-phospho-(deoxyribonucleotide)m = (deoxyribonucleotide)n+m + AMP + beta-nicotinamide D-nucleotide.. In terms of biological role, DNA ligase that catalyzes the formation of phosphodiester linkages between 5'-phosphoryl and 3'-hydroxyl groups in double-stranded DNA using NAD as a coenzyme and as the energy source for the reaction. It is essential for DNA replication and repair of damaged DNA. This is DNA ligase from Helicobacter pylori (strain HPAG1).